The sequence spans 174 residues: Co-chaperone protein HscB homolog (174 aa).

The J domain maps to 2–74 (NYFELFKFSP…IRRAEHMLSL (73 aa)).

It belongs to the HscB family. In terms of assembly, interacts with HscA and stimulates its ATPase activity.

Co-chaperone involved in the maturation of iron-sulfur cluster-containing proteins. Seems to help targeting proteins to be folded toward HscA. The sequence is that of Co-chaperone protein HscB homolog from Shewanella baltica (strain OS185).